The following is a 639-amino-acid chain: UPF0313 protein CLJ_B0249 (639 aa).

Residues 295 to 566 enclose the Radical SAM core domain; that stretch reads AIKEVKFSIT…RMQRSLLQFS (272 aa). Residues C309, C313, and C316 each coordinate [4Fe-4S] cluster. Residues 597–639 are disordered; sequence YNKPYKKSHKKNNAKNKNNNYNKNKDVSKKNKKNSLSKHKKRK. Composition is skewed to basic residues over residues 600-610 and 626-639; these read PYKKSHKKNNA and KNKKNSLSKHKKRK.

Belongs to the UPF0313 family. [4Fe-4S] cluster serves as cofactor.

This is UPF0313 protein CLJ_B0249 from Clostridium botulinum (strain 657 / Type Ba4).